The chain runs to 72 residues: Large ribosomal subunit protein bL32 (72 aa).

It belongs to the bacterial ribosomal protein bL32 family.

This Dehalococcoides mccartyi (strain ATCC BAA-2266 / KCTC 15142 / 195) (Dehalococcoides ethenogenes (strain 195)) protein is Large ribosomal subunit protein bL32.